We begin with the raw amino-acid sequence, 512 residues long: GMP synthase [glutamine-hydrolyzing] (512 aa).

The 191-residue stretch at 7 to 197 (TIIVLDFGSQ…VFGVCGCSEG (191 aa)) folds into the Glutamine amidotransferase type-1 domain. The active-site Nucleophile is C84. Active-site residues include H171 and E173. The region spanning 198–387 (WNMENFIEVE…LGIPDEIVWR (190 aa)) is the GMPS ATP-PPase domain. 225–231 (SGGVDSS) is a binding site for ATP.

In terms of assembly, homodimer.

It carries out the reaction XMP + L-glutamine + ATP + H2O = GMP + L-glutamate + AMP + diphosphate + 2 H(+). It functions in the pathway purine metabolism; GMP biosynthesis; GMP from XMP (L-Gln route): step 1/1. In terms of biological role, catalyzes the synthesis of GMP from XMP. This is GMP synthase [glutamine-hydrolyzing] from Bacillus anthracis.